Consider the following 270-residue polypeptide: Glutamate racemase (270 aa).

Residues 13–14 and 45–46 contribute to the substrate site; these read DS and YG. The active-site Proton donor/acceptor is cysteine 77. A substrate-binding site is contributed by 78-79; that stretch reads NT. Cysteine 185 (proton donor/acceptor) is an active-site residue. 186 to 187 is a binding site for substrate; sequence TH.

This sequence belongs to the aspartate/glutamate racemases family.

It carries out the reaction L-glutamate = D-glutamate. Its pathway is cell wall biogenesis; peptidoglycan biosynthesis. Functionally, provides the (R)-glutamate required for cell wall biosynthesis. The chain is Glutamate racemase from Vibrio parahaemolyticus serotype O3:K6 (strain RIMD 2210633).